Consider the following 151-residue polypeptide: HTH-type transcriptional regulator FL11 (151 aa).

Residues 5–66 (LDEIDRRIIK…IVNPEALGYS (62 aa)) form the HTH asnC-type domain. A DNA-binding region (H-T-H motif) is located at residues 24 to 43 (LREISKITGLAESTIHERIK). 98–104 (ETTGDYD) lines the L-arginine pocket. Residues N118, D122, and 133–135 (THT) each bind L-lysine. Residues D122 and 133–135 (THT) each bind L-arginine.

Homodimer. Binds DNA as a dimer and an octamer.

With respect to regulation, in the famine mode, FL11 forms dimers and acts as a repressor, leading to growth arrest. In the feast mode, in the presence of high concentrations of lysine or arginine, four dimers assemble into an octamer and cover the fl11 and lysine biosynthesis promoters. This leads to the inhibition of fl11 expression and lysine biosynthesis, decrease of the FL11 concentration in the cell, derepression of the target genes and activation of the metabolism. In terms of biological role, DNA-binding protein involved in the repression of transcription of a large number of genes, thereby arresting growth, in response to environmental changes. This is HTH-type transcriptional regulator FL11 from Pyrococcus abyssi (strain GE5 / Orsay).